Here is a 364-residue protein sequence, read N- to C-terminus: Aminomethyltransferase (364 aa).

This sequence belongs to the GcvT family. The glycine cleavage system is composed of four proteins: P, T, L and H.

It carries out the reaction N(6)-[(R)-S(8)-aminomethyldihydrolipoyl]-L-lysyl-[protein] + (6S)-5,6,7,8-tetrahydrofolate = N(6)-[(R)-dihydrolipoyl]-L-lysyl-[protein] + (6R)-5,10-methylene-5,6,7,8-tetrahydrofolate + NH4(+). Its function is as follows. The glycine cleavage system catalyzes the degradation of glycine. The chain is Aminomethyltransferase from Shewanella piezotolerans (strain WP3 / JCM 13877).